We begin with the raw amino-acid sequence, 1678 residues long: Nuclear pore complex protein Nup98-Nup96 (1678 aa).

Low complexity predominate over residues 1–11 (MFGQNKSFGSS). 5 disordered regions span residues 1-41 (MFGQ…QPAN), 68-100 (SSIF…FGST), 301-366 (TTGS…GAPA), 441-473 (FGNT…TQAT), and 603-631 (SKEA…RSVH). A compositionally biased stretch (gly residues) spans 12-22 (SFGGGSSGSGL). 2 stretches are compositionally biased toward low complexity: residues 23–38 (FGQN…LFGQ) and 73–83 (SPQQPQNNQSS). Residues 306-329 (LFGNQQPQTNTGGSLFGNTQNQNQ) are compositionally biased toward polar residues. The span at 345-366 (FGQAQQQPQQQSSGFSFGGAPA) shows a compositional bias: low complexity. Polar residues-rich tracts occupy residues 456-473 (SQPQ…TQAT) and 615-628 (RNST…LTNR). Residues 777–919 (KPDYFSLPTI…GSWVFRVDHF (143 aa)) form the Peptidase S59 domain. The active-site Nucleophile is Ser-920.

Belongs to the nucleoporin GLFG family. Part of the NPC. Post-translationally, the Nup98 and Nup96 chains are autoproteolytically processed from a single precursor protein.

It localises to the cytoplasmic granule. The protein resides in the nucleus membrane. The protein localises to the nucleus. Its subcellular location is the nuclear pore complex. It is found in the nucleus envelope. It localises to the chromosome. Its function is as follows. Nup98 and Nup96 play a role in the bidirectional transport across the nucleoporin complex (NPC). Required for the nuclear import of hcp-4 during mitotic prophase, this step is essential for centrosome assembly and resolution. Regulates nucleoporin npp-5 localization to the nuclear membrane during interphase and to kinetochores during metaphase. Has a role in P granule integrity; may promote the 'liquid phase' of P granules by increasing the number of interacting RNA-protein complexes. Binds nos-2 mRNA, probably indirectly, and promotes its accumulation in P granules. The protein is Nuclear pore complex protein Nup98-Nup96 of Caenorhabditis elegans.